The following is a 565-amino-acid chain: Thiol:disulfide interchange protein DsbD (565 aa).

A signal peptide spans 1-19; it reads MAQRIFTLILLLCSTSVFA. At 20–162 the chain is on the periplasmic side; that stretch reads GLFDAPGRSQ…VPQQEQPTAQ (143 aa). Intrachain disulfides connect Cys-122–Cys-128 and Cys-182–Cys-304. A helical transmembrane segment spans residues 163 to 183; it reads LPFSALWALLIGIGIAFTPCV. Over 184 to 207 the chain is Cytoplasmic; it reads LPMYPLISGIVLGGKQRLSTARAL. A helical membrane pass occupies residues 208–228; it reads LLTFIYVQGMALTYTALGLVV. Residues 229–242 are Periplasmic-facing; it reads AAAGLQFQAALQHP. A helical transmembrane segment spans residues 243–263; sequence YVLIGLTIVFTLLAMSMFGLL. Residues 264–295 are Cytoplasmic-facing; it reads TLQLPSSLQTRLTLMSNRQQGGSPGGVFIMGT. The helical transmembrane segment at 296–316 threads the bilayer; sequence IAGLICSPCTTAPLSAILLYI. The Periplasmic segment spans residues 317–322; sequence AQSGNM. Residues 323–343 form a helical membrane-spanning segment; that stretch reads WLGGGTLYLYALGMGLPLMLI. Topologically, residues 344–356 are cytoplasmic; sequence TVFGNRLLPKSGP. The helical transmembrane segment at 357–377 threads the bilayer; the sequence is WMEQVKTAFGFVILALPVFLL. Residues 378 to 383 are Periplasmic-facing; the sequence is ERVIGD. A helical membrane pass occupies residues 384–404; sequence VWGLRLWSALGVAFFGWAFIT. Residues 405–417 lie on the Cytoplasmic side of the membrane; sequence SLQAKRGWMRVVQ. The chain crosses the membrane as a helical span at residues 418 to 438; sequence IILLAAALVSVRPLQDWAFGA. The Thioredoxin domain occupies 434–565; it reads WAFGATHTAQ…FSAHLRDRQP (132 aa). Residues 439–565 are Periplasmic-facing; sequence THTAQTQTHL…FSAHLRDRQP (127 aa). A disulfide bond links Cys-480 and Cys-483.

The protein belongs to the thioredoxin family. DsbD subfamily.

It is found in the cell inner membrane. The enzyme catalyses [protein]-dithiol + NAD(+) = [protein]-disulfide + NADH + H(+). The catalysed reaction is [protein]-dithiol + NADP(+) = [protein]-disulfide + NADPH + H(+). In terms of biological role, required to facilitate the formation of correct disulfide bonds in some periplasmic proteins and for the assembly of the periplasmic c-type cytochromes. Acts by transferring electrons from cytoplasmic thioredoxin to the periplasm. This transfer involves a cascade of disulfide bond formation and reduction steps. The polypeptide is Thiol:disulfide interchange protein DsbD (Escherichia coli O157:H7).